Here is an 85-residue protein sequence, read N- to C-terminus: Putative membrane protein insertion efficiency factor (85 aa).

Belongs to the UPF0161 family.

It localises to the cell inner membrane. Could be involved in insertion of integral membrane proteins into the membrane. In Fervidobacterium nodosum (strain ATCC 35602 / DSM 5306 / Rt17-B1), this protein is Putative membrane protein insertion efficiency factor.